Reading from the N-terminus, the 158-residue chain is 6,7-dimethyl-8-ribityllumazine synthase (158 aa).

5-amino-6-(D-ribitylamino)uracil-binding positions include phenylalanine 23, 61 to 63 (SFE), and 85 to 87 (AVI). 90–91 (ET) lines the (2S)-2-hydroxy-3-oxobutyl phosphate pocket. The Proton donor role is filled by histidine 93. Position 118 (phenylalanine 118) interacts with 5-amino-6-(D-ribitylamino)uracil. (2S)-2-hydroxy-3-oxobutyl phosphate is bound at residue arginine 132.

Belongs to the DMRL synthase family.

It catalyses the reaction (2S)-2-hydroxy-3-oxobutyl phosphate + 5-amino-6-(D-ribitylamino)uracil = 6,7-dimethyl-8-(1-D-ribityl)lumazine + phosphate + 2 H2O + H(+). The protein operates within cofactor biosynthesis; riboflavin biosynthesis; riboflavin from 2-hydroxy-3-oxobutyl phosphate and 5-amino-6-(D-ribitylamino)uracil: step 1/2. In terms of biological role, catalyzes the formation of 6,7-dimethyl-8-ribityllumazine by condensation of 5-amino-6-(D-ribitylamino)uracil with 3,4-dihydroxy-2-butanone 4-phosphate. This is the penultimate step in the biosynthesis of riboflavin. The chain is 6,7-dimethyl-8-ribityllumazine synthase from Prochlorococcus marinus (strain MIT 9515).